Consider the following 217-residue polypeptide: Large ribosomal subunit protein uL4 (217 aa).

Residues 46-103 form a disordered region; sequence KRQGTHATKTRGMVSGGGRKPFRQKGTGRARQGSIRAPHFTGGGTVHGPQPRDYSQRT.

Belongs to the universal ribosomal protein uL4 family. As to quaternary structure, part of the 50S ribosomal subunit.

Its function is as follows. One of the primary rRNA binding proteins, this protein initially binds near the 5'-end of the 23S rRNA. It is important during the early stages of 50S assembly. It makes multiple contacts with different domains of the 23S rRNA in the assembled 50S subunit and ribosome. Forms part of the polypeptide exit tunnel. In Corynebacterium jeikeium (strain K411), this protein is Large ribosomal subunit protein uL4.